The chain runs to 216 residues: Octanoyltransferase (216 aa).

A BPL/LPL catalytic domain is found at 33 to 216 (AQTADELWIV…AEKLTRHLSG (184 aa)). Residues 72–79 (RGGEVTYH), 148–150 (ALG), and 162–164 (GVS) contribute to the substrate site. Cys180 serves as the catalytic Acyl-thioester intermediate.

The protein belongs to the LipB family.

It is found in the cytoplasm. It catalyses the reaction octanoyl-[ACP] + L-lysyl-[protein] = N(6)-octanoyl-L-lysyl-[protein] + holo-[ACP] + H(+). Its pathway is protein modification; protein lipoylation via endogenous pathway; protein N(6)-(lipoyl)lysine from octanoyl-[acyl-carrier-protein]: step 1/2. In terms of biological role, catalyzes the transfer of endogenously produced octanoic acid from octanoyl-acyl-carrier-protein onto the lipoyl domains of lipoate-dependent enzymes. Lipoyl-ACP can also act as a substrate although octanoyl-ACP is likely to be the physiological substrate. This chain is Octanoyltransferase, found in Herminiimonas arsenicoxydans.